Reading from the N-terminus, the 185-residue chain is Elongation factor P (185 aa).

Belongs to the elongation factor P family.

It localises to the cytoplasm. Its pathway is protein biosynthesis; polypeptide chain elongation. In terms of biological role, involved in peptide bond synthesis. Stimulates efficient translation and peptide-bond synthesis on native or reconstituted 70S ribosomes in vitro. Probably functions indirectly by altering the affinity of the ribosome for aminoacyl-tRNA, thus increasing their reactivity as acceptors for peptidyl transferase. This is Elongation factor P from Clostridium botulinum (strain Alaska E43 / Type E3).